A 514-amino-acid polypeptide reads, in one-letter code: Maturase K (514 aa).

It belongs to the intron maturase 2 family. MatK subfamily.

The protein resides in the plastid. It is found in the chloroplast. In terms of biological role, usually encoded in the trnK tRNA gene intron. Probably assists in splicing its own and other chloroplast group II introns. This Erythronium grandiflorum (Yellow avalanche-lily) protein is Maturase K.